Here is a 148-residue protein sequence, read N- to C-terminus: Lipoprotein MlpA (148 aa).

The signal sequence occupies residues 1–17 (MKIINILFCLFLLLLNS). Cys-18 carries N-palmitoyl cysteine lipidation. A lipid anchor (S-diacylglycerol cysteine) is attached at Cys-18. A disordered region spans residues 26 to 58 (LKNNAQQTKSRGKRDLTQKEATPEKPKSKEELL). The segment covering 38 to 58 (KRDLTQKEATPEKPKSKEELL) has biased composition (basic and acidic residues).

The protein belongs to the Multicopy lipoprotein (Mlp) family.

The protein resides in the cell outer membrane. An outer membrane protein that may participate in pathogenesis. Some human Lyme disease patients have antibodies against this protein. The Mlp proteins probably undergo intragenic recombination, generating new alleles. The sequence is that of Lipoprotein MlpA (mlpA) from Borreliella burgdorferi (strain ATCC 35210 / DSM 4680 / CIP 102532 / B31) (Borrelia burgdorferi).